The sequence spans 65 residues: Large ribosomal subunit protein bL35 (65 aa).

This sequence belongs to the bacterial ribosomal protein bL35 family.

The sequence is that of Large ribosomal subunit protein bL35 from Desulfitobacterium hafniense (strain DSM 10664 / DCB-2).